Here is a 1166-residue protein sequence, read N- to C-terminus: IQ domain-containing protein N (1166 aa).

Polar residues predominate over residues 1-19; the sequence is MQPATQLQFTNHLSPNGQC. Residues 1–56 are disordered; it reads MQPATQLQFTNHLSPNGQCILQPPPTPSLPDKMEKAPPQPQHEGLKSEEHLPQQPA. The region spanning 89–118 is the IQ 1 domain; that stretch reads HARAATLIQANWRGYRLRQKLISQMTAAKA. Disordered regions lie at residues 431–450, 769–797, and 829–848; these read VCPG…VATP, LSAP…TTQG, and DSGA…PCQE. IQ domains follow at residues 907–932, 928–955, 952–979, 1091–1119, and 1114–1143; these read AVTT…RRAT, HRRA…RATT, RATT…MLHP, RDKA…MAAK, and QQMA…LLGP. The segment at 1145-1166 is disordered; it reads DPWSSSQHMHWASSQHTHWPGI. Residues 1147 to 1166 are compositionally biased toward polar residues; it reads WSSSQHMHWASSQHTHWPGI.

Interacts with calmodulin.

In terms of biological role, essential for spermiogenesis and fertilization. May be required for manchette assembly in elongating spermatids. The protein is IQ domain-containing protein N (IQCN) of Macaca fascicularis (Crab-eating macaque).